The sequence spans 448 residues: Beclin-1 (448 aa).

N-acetylmethionine is present on Met-1. Phosphoserine occurs at positions 14 and 29. The segment at 47–66 is disordered; that stretch reads TTAQAKPGETQEEEANSGEE. 3 positions are modified to phosphoserine; by AMPK: Ser-88, Ser-91, and Ser-94. Positions 106–125 match the BH3 motif; sequence TMENLSRRLKVTGDLFDIMS. Residues 110–157 are interaction with BCL2 and BCL2L1 isoform Bcl-X(L); it reads LSRRLKVTGDLFDIMSGQTDVDHPLCEECTDTLLDQLDTQLNVTENEC. Thr-117 carries the post-translational modification Phosphothreonine; by DAPK1. The stretch at 140-268 forms a coiled coil; that stretch reads DTLLDQLDTQ…LDKLKKTNVF (129 aa). Residues 243–448 are evolutionary conserved domain (ECD); it reads DELKSVENQV…AWVSSQFYNK (206 aa). Glycyl lysine isopeptide (Lys-Gly) (interchain with G-Cter in ubiquitin) cross-links involve residues Lys-400 and Lys-435. Residues 423–448 are required for membrane-association; sequence WTKALKFMLTNLKWGLAWVSSQFYNK.

The protein belongs to the beclin family. As to quaternary structure, a homodimeric form is proposed to exist; this metastable form readily transits to ATG14- or UVRAG-containing complexes with BECN1:UVRAG being more stable than BECN1:ATG14. Component of the PI3K (PI3KC3/PI3K-III/class III phosphatidylinositol 3-kinase) complex whose core is composed of the catalytic subunit PIK3C3, the regulatory subunit PIK3R4 and BECN1, and associates with additional regulatory/auxiliary subunits to form alternative complex forms. Accepted alternative complex forms containing a fourth regulatory subunit in a mutually exclusive manner are PI3K complex I (PI3KC3-C1) containing ATG14, and PI3K complex II (PI3KC3-C2) containing UVRAG. PI3KC3-C1 displays a V-shaped architecture with PIK3R4 serving as a bridge between PIK3C3 and the ATG14:BECN1 subcomplex. Both, PI3KC3-C1 and PI3KC3-C2, can associate with further regulatory subunits, such as RUBCN, SH3GLB1/Bif-1 and AMBRA1. PI3KC3-C1 probably associates with PIK3CB. Forms a complex with PPP2CA and AMBRA1; AMBRA1 and BECN1 components of the complex regulate MYC stability via different pathways. Component of the complex, at least composed of LRPPRC, BECN1 and BCL2; the interactions prevent BECN1 from forming an autophagy-inducing complex with PIK3C3. Interacts with AMBRA1, GOPC, GRID2 and PIK3CB. Interacts with BCL2 and BCL2L1 isoform Bcl-X(L); the interaction inhibits BECN1 function in promoting autophagy by interfering with the formation of the PI3K complex. Interacts with cytosolic HMGB1; inhibits the interaction of BECN1 and BCL2 leading to promotion of autophagy. Interacts with USP10, USP13, VMP1, DAPK1. Interacts with the poly-Gln domain of ATXN3; the interaction causes deubiquitination at Lys-400 and stabilizes BECN1. Interacts with SLAMF1. Interacts with TRIM5; the interaction causes activation of BECN1 by causing its dissociation from its inhibitors BCL2 and TAB2. Interacts with active ULK1 (phosphorylated on 'Ser-317') and MEFV simultaneously. Interacts with TRIM50. Interacts with TRIM16. Interacts with WDR81 and WDR91; negatively regulates the PI3 kinase/PI3K activity associated with endosomal membranes. Interacts with LAPTM4B; competes with EGFR for LAPTM4B binding; regulates EGFR activity. Interacts with ATG14; this interaction is increased in the absence of TMEM39A. Interacts with WASHC1; preventing interaction with AMBRA1 and the DCX(AMBRA1) complex and subsequent ubiquitination. Interacts with TRIM17. Interacts with BCL2L10/BCL-B (via BH1 domain). Interacts with SH3BGRL. Interacts with Irgm1; enhancing BECN1-interacting partners and influencing the composition of the BECN1 complex. Interacts with ARMC3. Interacts with LRPPRC. In terms of assembly, (Microbial infection) Interacts with murine gammaherpesvirus 68 M11; the viral protein binds BECN1 with higher affinity than cellular BCL2. Phosphorylation at Thr-117 by DAPK1 reduces its interaction with BCL2 and BCL2L1 and promotes induction of autophagy. In response to autophagic stimuli, phosphorylated at serine residues by AMPK in an ATG14-dependent manner, and this phosphorylation is critical for maximally efficient autophagy. Post-translationally, polyubiquitinated by NEDD4, both with 'Lys-11'- and 'Lys-63'-linkages. 'Lys-11'-linked polyubiquitination leads to degradation and is enhanced when the stabilizing interaction partner VPS34 is depleted. Deubiquitinated by USP10 and USP13, leading to stabilize the PIK3C3/VPS34-containing complexes. Polyubiquitinated at Lys-400 with 'Lys-48'-linkages. 'Lys-48'-linked poyubiquitination of Lys-400 leads to degradation. Deubiquitinated by ATXN3, leading to stabilization. Ubiquitinated at Lys-435 via 'Lys-63'-linkage by the DCX(AMBRA1) complex, thereby increasing the association between BECN1 and PIK3C3 to promote PIK3C3 activity. 'Lys-48'-linked ubiquitination by RNF216 leads to proteasomal degradation and autophagy inhibition. In terms of processing, proteolytically processed by caspases including CASP8 and CASP3; the C-terminal fragments lack autophagy-inducing capacity and are proposed to induce apoptosis. Thus the cleavage is proposed to be an determinant to switch from autophagy to apoptosis pathways affecting cellular homeostasis including viral infections and survival of tumor cells.

It is found in the cytoplasm. The protein localises to the golgi apparatus. Its subcellular location is the trans-Golgi network membrane. The protein resides in the endosome membrane. It localises to the endoplasmic reticulum membrane. It is found in the mitochondrion membrane. The protein localises to the endosome. Its subcellular location is the cytoplasmic vesicle. The protein resides in the autophagosome. It localises to the mitochondrion. It is found in the nucleus. Its function is as follows. Plays a central role in autophagy. Acts as a core subunit of different PI3K complex forms that mediate formation of phosphatidylinositol 3-phosphate and are believed to play a role in multiple membrane trafficking pathways: PI3KC3-C1 is involved in initiation of autophagosomes and PI3KC3-C2 in maturation of autophagosomes and endocytosis. Involved in regulation of degradative endocytic trafficking and required for the abscission step in cytokinesis, probably in the context of PI3KC3-C2. Essential for the formation of PI3KC3-C2 but not PI3KC3-C1 PI3K complex forms. Involved in endocytosis including endosome formation in neuronal cells. May play a role in antiviral host defense. Functionally, beclin-1-C 35 kDa localized to mitochondria can promote apoptosis; it induces the mitochondrial translocation of BAX and the release of proapoptotic factors. The polypeptide is Beclin-1 (Becn1) (Mus musculus (Mouse)).